The primary structure comprises 653 residues: DNA ligase (653 aa).

NAD(+) contacts are provided by residues 32–36 and 80–81; these read NFEYD and SL. Lys104 functions as the N6-AMP-lysine intermediate in the catalytic mechanism. NAD(+)-binding residues include Arg125, Glu159, and Lys297. Zn(2+)-binding residues include Cys386, Cys389, Cys406, and Cys411. A BRCT domain is found at 571-653; the sequence is GGSEKLKGLT…EEFIQLLNEA (83 aa).

It belongs to the NAD-dependent DNA ligase family. LigA subfamily. It depends on Mg(2+) as a cofactor. The cofactor is Mn(2+).

The catalysed reaction is NAD(+) + (deoxyribonucleotide)n-3'-hydroxyl + 5'-phospho-(deoxyribonucleotide)m = (deoxyribonucleotide)n+m + AMP + beta-nicotinamide D-nucleotide.. Its function is as follows. DNA ligase that catalyzes the formation of phosphodiester linkages between 5'-phosphoryl and 3'-hydroxyl groups in double-stranded DNA using NAD as a coenzyme and as the energy source for the reaction. It is essential for DNA replication and repair of damaged DNA. This chain is DNA ligase, found in Lachnoclostridium phytofermentans (strain ATCC 700394 / DSM 18823 / ISDg) (Clostridium phytofermentans).